Here is a 236-residue protein sequence, read N- to C-terminus: MTDLNELKLFATTPHPCSYLDDRDATTVFIDPEVSVDQNLYSQLTNYGFRRSGKHIYRPACKTCQACIPIRVDVETFTPNRSQQRCLRKNKDLTVTVVSTIDTDEHYTLYAKYIERRHSDGDMYPPKRDEYRSFLSAQWGVTKYLEFRNSENSLIGVAVADQLKNGISAVYTFFDPNEQKRSLGVYAVLAQIEWAQKQSNRYVYLGYWIKECQKMSYKTLYKPFELFINNQWLTFI.

Belongs to the R-transferase family. Bpt subfamily.

It localises to the cytoplasm. It carries out the reaction N-terminal L-glutamyl-[protein] + L-leucyl-tRNA(Leu) = N-terminal L-leucyl-L-glutamyl-[protein] + tRNA(Leu) + H(+). The enzyme catalyses N-terminal L-aspartyl-[protein] + L-leucyl-tRNA(Leu) = N-terminal L-leucyl-L-aspartyl-[protein] + tRNA(Leu) + H(+). Functions in the N-end rule pathway of protein degradation where it conjugates Leu from its aminoacyl-tRNA to the N-termini of proteins containing an N-terminal aspartate or glutamate. The polypeptide is Aspartate/glutamate leucyltransferase (Saccharophagus degradans (strain 2-40 / ATCC 43961 / DSM 17024)).